The sequence spans 53 residues: MMIKVLLLLSSALVLFTPEAEGGCGCHTECSLQCSFSGCGYVCGLRCRCSWGK.

Residues 1–22 (MMIKVLLLLSSALVLFTPEAEG) form the signal peptide. Tryptophan amide is present on tryptophan 51.

Post-translationally, contains 4 disulfide bonds.

The protein resides in the secreted. Its subcellular location is the nematocyst. Its function is as follows. In vivo, only causes a weak change in behavior in shrimps (C.multidentata) (slight twitching of the walking legs), but no lethal effect is observed. No activity is observed when injected into fly larvae (M.domestica). The polypeptide is Toxin CjTL7 (Epiactis japonica (Sea anemone)).